Consider the following 128-residue polypeptide: Pi-hexatoxin-Hi1c (128 aa).

The signal sequence occupies residues 1-19 (MKLRITLALTSVLAFCVFG). Residues 20 to 47 (DKENENLMENLLEDDLLDIFTDAIHMER) constitute a propeptide that is removed on maturation. 6 cysteine pairs are disulfide-bonded: Cys-54-Cys-69, Cys-61-Cys-74, Cys-68-Cys-84, Cys-93-Cys-108, Cys-100-Cys-113, and Cys-107-Cys-124. 2 Domain repeats span residues 54-84 (CIAK…HEVC) and 93-124 (CLEK…HPVC). The segment at 54-124 (CIAKWKSCAG…ERRGNKHPVC (71 aa)) is 2 X approximate repeats with cysteine pattern C-C-CC-C-C.

Belongs to the psalmotoxin-1 family. Double-knot toxin subfamily. Expressed by the venom gland.

Its subcellular location is the secreted. Its function is as follows. This toxin potently and selectively inhibits ASIC1a, an isoform of the gene ASIC1. It incompletely inhibits ASIC1a activation in a pH-independent and slowly reversible manner. This toxin acts by binding to and stabilizing the closed state of the channel, thereby impeding the transition into a conducting state. This toxin may bind to the acidic pocket of ASIC1a, since mutation of a key residue of this pocket (Arg-350) abolishes the ability of the toxin to inhibit ASIC1a. In vivo, this toxin protects the brain from neuronal injury when administered up to 8 hours after stroke onset. The polypeptide is Pi-hexatoxin-Hi1c (Hadronyche infensa (Fraser island funnel-web spider)).